The chain runs to 116 residues: Protein Rev (116 aa).

Position 5 is a phosphoserine; by host CK2 (S5). The tract at residues 18–26 (YIKILYQSN) is homomultimerization. Residues 34-50 (TRKARRNRRRRWRARQR) carry the Nuclear localization signal and RNA-binding (RRE) motif. The Nuclear export signal and binding to XPO1 motif lies at 73-84 (LQLPLLEKLHIN). The tract at residues 90–116 (GQGTEKGVGSPQISVESRAVLGSGTKE) is disordered. A Phosphoserine; by host modification is found at S99.

Belongs to the HIV-1 REV protein family. As to quaternary structure, homomultimer; when bound to the RRE. Multimeric assembly is essential for activity and may involve XPO1. Binds to human KPNB1, XPO1, TNPO1, RANBP5 and IPO7. Interacts with the viral Integrase. Interacts with human KHDRBS1. Interacts with human NAP1; this interaction decreases Rev multimerization and stimulates its activity. Interacts with human DEAD-box helicases DDX3 and DDX24; these interactions may serve for viral RNA export to the cytoplasm and packaging, respectively. Interacts with human PSIP1; this interaction may inhibit HIV-1 DNA integration by promoting dissociation of the Integrase-LEDGF/p75 complex. Post-translationally, asymmetrically arginine dimethylated at one site by host PRMT6. Methylation impairs the RNA-binding activity and export of viral RNA from the nucleus to the cytoplasm. Phosphorylated by protein kinase CK2. Presence of, and maybe binding to the N-terminus of the regulatory beta subunit of CK2 is necessary for CK2-mediated Rev's phosphorylation.

It is found in the host nucleus. The protein localises to the host nucleolus. It localises to the host cytoplasm. Escorts unspliced or incompletely spliced viral pre-mRNAs (late transcripts) out of the nucleus of infected cells. These pre-mRNAs carry a recognition sequence called Rev responsive element (RRE) located in the env gene, that is not present in fully spliced viral mRNAs (early transcripts). This function is essential since most viral proteins are translated from unspliced or partially spliced pre-mRNAs which cannot exit the nucleus by the pathway used by fully processed cellular mRNAs. Rev itself is translated from a fully spliced mRNA that readily exits the nucleus. Rev's nuclear localization signal (NLS) binds directly to KPNB1/Importin beta-1 without previous binding to KPNA1/Importin alpha-1. KPNB1 binds to the GDP bound form of RAN (Ran-GDP) and targets Rev to the nucleus. In the nucleus, the conversion from Ran-GDP to Ran-GTP dissociates Rev from KPNB1 and allows Rev's binding to the RRE in viral pre-mRNAs. Rev multimerization on the RRE via cooperative assembly exposes its nuclear export signal (NES) to the surface. Rev can then form a complex with XPO1/CRM1 and Ran-GTP, leading to nuclear export of the complex. Conversion from Ran-GTP to Ran-GDP mediates dissociation of the Rev/RRE/XPO1/RAN complex, so that Rev can return to the nucleus for a subsequent round of export. Beside KPNB1, also seems to interact with TNPO1/Transportin-1, RANBP5/IPO5 and IPO7/RANBP7 for nuclear import. The nucleoporin-like HRB/RIP is an essential cofactor that probably indirectly interacts with Rev to release HIV RNAs from the perinuclear region to the cytoplasm. This chain is Protein Rev, found in Human immunodeficiency virus type 1 group M subtype F2 (isolate MP257) (HIV-1).